The primary structure comprises 511 residues: Histidine ammonia-lyase (511 aa).

The segment at residues 142–144 (ASG) is a cross-link (5-imidazolinone (Ala-Gly)). Ser143 bears the 2,3-didehydroalanine (Ser) mark.

It belongs to the PAL/histidase family. Contains an active site 4-methylidene-imidazol-5-one (MIO), which is formed autocatalytically by cyclization and dehydration of residues Ala-Ser-Gly.

Its subcellular location is the cytoplasm. It carries out the reaction L-histidine = trans-urocanate + NH4(+). It participates in amino-acid degradation; L-histidine degradation into L-glutamate; N-formimidoyl-L-glutamate from L-histidine: step 1/3. The polypeptide is Histidine ammonia-lyase (Brucella ovis (strain ATCC 25840 / 63/290 / NCTC 10512)).